We begin with the raw amino-acid sequence, 408 residues long: tRNA-specific 2-thiouridylase MnmA (408 aa).

ATP-binding positions include 20-27 (AMSGGVDS) and L46. The Nucleophile role is filled by C114. A disulfide bridge connects residues C114 and C210. G138 contacts ATP. The segment at 160 to 162 (RDQ) is interaction with tRNA. The active-site Cysteine persulfide intermediate is C210.

Belongs to the MnmA/TRMU family.

The protein resides in the cytoplasm. The enzyme catalyses S-sulfanyl-L-cysteinyl-[protein] + uridine(34) in tRNA + AH2 + ATP = 2-thiouridine(34) in tRNA + L-cysteinyl-[protein] + A + AMP + diphosphate + H(+). Catalyzes the 2-thiolation of uridine at the wobble position (U34) of tRNA, leading to the formation of s(2)U34. The chain is tRNA-specific 2-thiouridylase MnmA from Bartonella quintana (strain Toulouse) (Rochalimaea quintana).